A 151-amino-acid polypeptide reads, in one-letter code: Nucleoside diphosphate kinase (151 aa).

Positions 9, 57, 86, 92, 103, and 113 each coordinate ATP. His-116 acts as the Pros-phosphohistidine intermediate in catalysis.

This sequence belongs to the NDK family. Homotetramer. Mg(2+) is required as a cofactor.

Its subcellular location is the cytoplasm. It carries out the reaction a 2'-deoxyribonucleoside 5'-diphosphate + ATP = a 2'-deoxyribonucleoside 5'-triphosphate + ADP. The enzyme catalyses a ribonucleoside 5'-diphosphate + ATP = a ribonucleoside 5'-triphosphate + ADP. Major role in the synthesis of nucleoside triphosphates other than ATP. The ATP gamma phosphate is transferred to the NDP beta phosphate via a ping-pong mechanism, using a phosphorylated active-site intermediate. The sequence is that of Nucleoside diphosphate kinase from Chloroflexus aurantiacus (strain ATCC 29364 / DSM 637 / Y-400-fl).